Here is a 339-residue protein sequence, read N- to C-terminus: Transcription initiation factor IIB (339 aa).

Residues 39–70 (EELICPVCGSKSIIKDYERAEIVCEMCGCVLQ) form a TFIIB-type zinc finger. The Zn(2+) site is built by C43, C46, C62, and C65. 2 tandem repeats follow at residues 156–239 (SELD…SREL) and 250–331 (DYVP…ELTE).

The protein belongs to the TFIIB family.

In terms of biological role, stabilizes TBP binding to an archaeal box-A promoter. Also responsible for recruiting RNA polymerase II to the pre-initiation complex (DNA-TBP-TFIIB). The chain is Transcription initiation factor IIB from Methanococcus maripaludis (strain DSM 14266 / JCM 13030 / NBRC 101832 / S2 / LL).